Here is a 566-residue protein sequence, read N- to C-terminus: Chaperonin GroEL 1 (566 aa).

ATP is bound by residues 29 to 32 (TIGP), 86 to 90 (DGTTT), Gly-413, and Asp-492. The tract at residues 520-540 (DKPEPPAPAGDGGGDPMGGMG) is disordered. The segment covering 529–540 (GDGGGDPMGGMG) has biased composition (gly residues).

This sequence belongs to the chaperonin (HSP60) family. In terms of assembly, forms a cylinder of 14 subunits composed of two heptameric rings stacked back-to-back. Interacts with the co-chaperonin GroES.

Its subcellular location is the cytoplasm. It catalyses the reaction ATP + H2O + a folded polypeptide = ADP + phosphate + an unfolded polypeptide.. Functionally, together with its co-chaperonin GroES, plays an essential role in assisting protein folding. The GroEL-GroES system forms a nano-cage that allows encapsulation of the non-native substrate proteins and provides a physical environment optimized to promote and accelerate protein folding. This is Chaperonin GroEL 1 from Prochlorococcus marinus (strain MIT 9313).